A 328-amino-acid polypeptide reads, in one-letter code: tRNA uridine(34) hydroxylase (328 aa).

The Rhodanese domain occupies 130–224; it reads LDKDTVVLDT…YGKDPEVQGE (95 aa). Residue Cys184 is the Cysteine persulfide intermediate of the active site.

It belongs to the TrhO family.

The enzyme catalyses uridine(34) in tRNA + AH2 + O2 = 5-hydroxyuridine(34) in tRNA + A + H2O. Functionally, catalyzes oxygen-dependent 5-hydroxyuridine (ho5U) modification at position 34 in tRNAs. In Streptococcus pneumoniae (strain Hungary19A-6), this protein is tRNA uridine(34) hydroxylase.